Reading from the N-terminus, the 268-residue chain is MTYTLLDPDELARRAAQVIGERTGILKHDVAVVLGSGWSSAVAALGSSRAVFPQAELPGFITPNAAGHTGELLSVRIGAHRVLVLAGRIHPYEGHDLRHVVHPVRTACAAGARIIVLTNAAGGLRADMAVGQLVLISDHLNLTTRSPLVGTHFVDLTNAYTTRLRKLASDTDPTLTEGVYAAQPGPHYETPAEIRMLRMLGADLVGMSTVHETIAARAAGAEVLGVSLVTNLAAGITGKPLNHAEVLAAGTASANRIGSLLADIIARF.

Phosphate is bound by residues Ser-36, His-68, 88–90 (RIH), and Ala-120. Position 189 (Glu-189) interacts with a purine D-ribonucleoside. Ser-208 contributes to the phosphate binding site. Asn-231 contributes to the a purine D-ribonucleoside binding site.

It belongs to the PNP/MTAP phosphorylase family. Homotrimer.

It catalyses the reaction a purine 2'-deoxy-D-ribonucleoside + phosphate = a purine nucleobase + 2-deoxy-alpha-D-ribose 1-phosphate. It functions in the pathway purine metabolism; purine nucleoside salvage. In terms of biological role, the purine nucleoside phosphorylases catalyze the phosphorolytic breakdown of the N-glycosidic bond in the beta-(deoxy)ribonucleoside molecules, with the formation of the corresponding free purine bases and pentose-1-phosphate. Cleaves guanosine, inosine, 2'-deoxyguanosine and 2'-deoxyinosine. This chain is Purine nucleoside phosphorylase (punA), found in Mycobacterium leprae (strain TN).